Consider the following 257-residue polypeptide: Aspartate/glutamate leucyltransferase (257 aa).

The protein belongs to the R-transferase family. Bpt subfamily.

The protein localises to the cytoplasm. The enzyme catalyses N-terminal L-glutamyl-[protein] + L-leucyl-tRNA(Leu) = N-terminal L-leucyl-L-glutamyl-[protein] + tRNA(Leu) + H(+). The catalysed reaction is N-terminal L-aspartyl-[protein] + L-leucyl-tRNA(Leu) = N-terminal L-leucyl-L-aspartyl-[protein] + tRNA(Leu) + H(+). Functionally, functions in the N-end rule pathway of protein degradation where it conjugates Leu from its aminoacyl-tRNA to the N-termini of proteins containing an N-terminal aspartate or glutamate. The polypeptide is Aspartate/glutamate leucyltransferase (Nitrobacter winogradskyi (strain ATCC 25391 / DSM 10237 / CIP 104748 / NCIMB 11846 / Nb-255)).